The sequence spans 153 residues: UPF0756 membrane protein BA_4840/GBAA_4840/BAS4489 (153 aa).

4 consecutive transmembrane segments (helical) span residues 8 to 28 (FLFI…TVAI), 54 to 74 (LGVT…EIGF), 87 to 107 (WIAL…VQLL), and 117 to 137 (LVFG…GPLI).

It belongs to the UPF0756 family.

Its subcellular location is the cell membrane. The sequence is that of UPF0756 membrane protein BA_4840/GBAA_4840/BAS4489 from Bacillus anthracis.